The primary structure comprises 291 residues: 4-hydroxy-tetrahydrodipicolinate synthase (291 aa).

Threonine 45 serves as a coordination point for pyruvate. Catalysis depends on tyrosine 133, which acts as the Proton donor/acceptor. The active-site Schiff-base intermediate with substrate is lysine 161. Isoleucine 203 contacts pyruvate.

It belongs to the DapA family. In terms of assembly, homotetramer; dimer of dimers.

The protein localises to the cytoplasm. The enzyme catalyses L-aspartate 4-semialdehyde + pyruvate = (2S,4S)-4-hydroxy-2,3,4,5-tetrahydrodipicolinate + H2O + H(+). It functions in the pathway amino-acid biosynthesis; L-lysine biosynthesis via DAP pathway; (S)-tetrahydrodipicolinate from L-aspartate: step 3/4. Catalyzes the condensation of (S)-aspartate-beta-semialdehyde [(S)-ASA] and pyruvate to 4-hydroxy-tetrahydrodipicolinate (HTPA). This is 4-hydroxy-tetrahydrodipicolinate synthase from Neisseria gonorrhoeae (strain ATCC 700825 / FA 1090).